Consider the following 329-residue polypeptide: Flotillin-like protein FloA (329 aa).

2 consecutive transmembrane segments (helical) span residues 6-26 and 27-47; these read FIVI…FVPI and GLWI…LVGM.

The protein belongs to the flotillin-like FloA family. Homooligomerizes.

Its subcellular location is the cell membrane. It localises to the membrane raft. Found in functional membrane microdomains (FMM) that may be equivalent to eukaryotic membrane rafts. FMMs are highly dynamic and increase in number as cells age. Flotillins are thought to be important factors in membrane fluidity. The polypeptide is Flotillin-like protein FloA (Staphylococcus aureus (strain JH1)).